Here is a 243-residue protein sequence, read N- to C-terminus: QNTVNFTYPDFWSYSLKNGTEITFLGDATRIPGALQLTKTDANGNPVRSSAGQASYSEPVFLWDSTGKAASFYTSFTFLLKNYGAPTADGLAFFLAPVDSSVKDYGGFLGLFRHETAADPSKNQVVAVEFDTWINKDWNDPPYPHIGIDVNSIVSVATTRWENDDAYGSSIATAHITYDARSKILTVLLSYEHGRDYILSHVVDLAKVLPQKVRIGFSAGVGYDEVTYILSWHFFSTLDGTNK.

Pyrrolidone carboxylic acid is present on Q1. N-linked (GlcNAc...) asparagine; in alpha chain glycosylation occurs at N5. Residue N18 is glycosylated (N-linked (GlcNAc...) asparagine). The Mn(2+) site is built by E129 and D131. 4 residues coordinate Ca(2+): D131, W133, N135, and D140. 2 residues coordinate Mn(2+): D140 and H145.

Belongs to the leguminous lectin family. In terms of assembly, homodimer of Alpha and Beta forms. In terms of processing, N-glycosylation of Asn-5 converts form Beta to form Alpha.

Lectin which has a strong affinity for both the Lewis b and y human blood-group determinants. In Griffonia simplicifolia (Bandeiraea simplicifolia), this protein is Lectin-4.